Here is an 89-residue protein sequence, read N- to C-terminus: UPF0473 protein Helmi_02360 (89 aa).

This sequence belongs to the UPF0473 family.

This chain is UPF0473 protein Helmi_02360, found in Heliobacterium modesticaldum (strain ATCC 51547 / Ice1).